We begin with the raw amino-acid sequence, 511 residues long: Glycerol kinase (511 aa).

Threonine 11 is a binding site for ADP. The ATP site is built by threonine 11, serine 12, and serine 13. Position 11 (threonine 11) interacts with sn-glycerol 3-phosphate. ADP is bound at residue arginine 15. Residues arginine 81, glutamate 82, tyrosine 133, and aspartate 242 each contribute to the sn-glycerol 3-phosphate site. Positions 81, 82, 133, 242, and 243 each coordinate glycerol. Positions 264 and 321 each coordinate ADP. ATP-binding residues include threonine 264, glycine 321, glutamine 325, and glycine 426. ADP contacts are provided by glycine 426 and asparagine 430.

This sequence belongs to the FGGY kinase family.

It catalyses the reaction glycerol + ATP = sn-glycerol 3-phosphate + ADP + H(+). Its pathway is polyol metabolism; glycerol degradation via glycerol kinase pathway; sn-glycerol 3-phosphate from glycerol: step 1/1. With respect to regulation, inhibited by fructose 1,6-bisphosphate (FBP). Key enzyme in the regulation of glycerol uptake and metabolism. Catalyzes the phosphorylation of glycerol to yield sn-glycerol 3-phosphate. In Verminephrobacter eiseniae (strain EF01-2), this protein is Glycerol kinase.